Here is a 542-residue protein sequence, read N- to C-terminus: Formate--tetrahydrofolate ligase (542 aa).

ATP is bound at residue threonine 53–threonine 60.

This sequence belongs to the formate--tetrahydrofolate ligase family.

It carries out the reaction (6S)-5,6,7,8-tetrahydrofolate + formate + ATP = (6R)-10-formyltetrahydrofolate + ADP + phosphate. Its pathway is one-carbon metabolism; tetrahydrofolate interconversion. In Thermotoga petrophila (strain ATCC BAA-488 / DSM 13995 / JCM 10881 / RKU-1), this protein is Formate--tetrahydrofolate ligase.